The sequence spans 127 residues: Cyclin-dependent kinase 2-associated protein 2 (127 aa).

Positions 1 to 47 (MSYKPIAPAPSSTPGSSTPGPGTPVPTAGSVPSPSGSVPGAAAPFRP) are disordered. The span at 9-44 (APSSTPGSSTPGPGTPVPTAGSVPSPSGSVPGAAAP) shows a compositional bias: low complexity. An interaction with CDK2 region spans residues 65–107 (PPGSQGSQSTYTDLLSVIEEMGKEIRPTYAGSKSAMERLKRGI).

It belongs to the CDK2AP family. As to quaternary structure, component of the nucleosome remodeling and deacetylase (NuRD) repressor complex, composed of core proteins MTA1, MTA2, MTA3, RBBP4, RBBP7, HDAC1, HDAC2, MBD2, MBD3, and peripherally associated proteins CDK2AP1, CDK2AP2, GATAD2A, GATAD2B, CHD3, CHD4 and CHD5. The exact stoichiometry of the NuRD complex is unknown, and some subunits such as MBD2 and MBD3, GATAD2A and GATAD2B, and CHD3, CHD4 and CHD5 define mutually exclusive NuRD complexes. Interacts with CDK2AP1. Interacts with CDK2. Interacts with MAPK1. Post-translationally, phosphorylated by MAPK1 and CDK2. As to expression, oocytes (at protein level).

Its subcellular location is the cytoplasm. It localises to the nucleus. In terms of biological role, acts as a component of the histone deacetylase NuRD complex which participates in the remodeling of chromatin. Inhibits cell cycle G1/S phase transition by repressing CDK2 expression and activation; represses CDK2 activation by inhibiting its interaction with cyclin E and A. Plays a role in regulating the self-renewal of embryonic stem cells (ESCs) and in maintaining cell survival during terminal differentiation of ESCs. Regulates microtubule organization of metaphase II oocytes. The polypeptide is Cyclin-dependent kinase 2-associated protein 2 (Cdk2ap2) (Mus musculus (Mouse)).